The following is a 142-amino-acid chain: Small heat shock protein IbpB (142 aa).

Residues 26–137 form the sHSP domain; the sequence is AGEGQSFPPY…AAQRIAISER (112 aa).

This sequence belongs to the small heat shock protein (HSP20) family. In terms of assembly, homodimer. Forms homomultimers of about 100-150 subunits at optimal growth temperatures. Conformation changes to oligomers at high temperatures or high ionic concentrations. The decrease in size of the multimers is accompanied by an increase in chaperone activity.

It is found in the cytoplasm. Its function is as follows. Associates with aggregated proteins, together with IbpA, to stabilize and protect them from irreversible denaturation and extensive proteolysis during heat shock and oxidative stress. Aggregated proteins bound to the IbpAB complex are more efficiently refolded and reactivated by the ATP-dependent chaperone systems ClpB and DnaK/DnaJ/GrpE. Its activity is ATP-independent. The chain is Small heat shock protein IbpB from Shigella boydii serotype 18 (strain CDC 3083-94 / BS512).